Reading from the N-terminus, the 229-residue chain is DNA polymerase III subunit epsilon (229 aa).

Positions 10 and 12 each coordinate a divalent metal cation. Substrate-binding residues include Asp-10, Glu-12, Glu-55, and His-60. His-156 functions as the Proton acceptor in the catalytic mechanism. Asp-161 lines the a divalent metal cation pocket. Asp-161 serves as a coordination point for substrate.

As to quaternary structure, DNA polymerase III contains a core (composed of alpha, epsilon and theta chains) that associates with a tau subunit. This core dimerizes to form the POLIII' complex. PolIII' associates with the gamma complex (composed of gamma, delta, delta', psi and chi chains) and with the beta chain to form the complete DNA polymerase III complex. Mg(2+) serves as cofactor. The cofactor is Mn(2+).

It carries out the reaction DNA(n) + a 2'-deoxyribonucleoside 5'-triphosphate = DNA(n+1) + diphosphate. Functionally, DNA polymerase III is a complex, multichain enzyme responsible for most of the replicative synthesis in bacteria. The epsilon subunit contain the editing function and is a proofreading 3'-5' exonuclease. The sequence is that of DNA polymerase III subunit epsilon (dnaQ) from Rickettsia typhi (strain ATCC VR-144 / Wilmington).